We begin with the raw amino-acid sequence, 216 residues long: NADH dehydrogenase [ubiquinone] iron-sulfur protein 7, mitochondrial (216 aa).

The N-terminal 37 residues, 1-37 (MAALAALRLLHPILAVRSGVGAALQVRGVHSSMAADS), are a transit peptide targeting the mitochondrion. Residues cysteine 91 and cysteine 92 each contribute to the [4Fe-4S] cluster site. Arginine 114 bears the Hydroxyarginine mark. Positions 156 and 186 each coordinate [4Fe-4S] cluster.

This sequence belongs to the complex I 20 kDa subunit family. In terms of assembly, core subunit of respiratory chain NADH dehydrogenase (Complex I) which is composed of 45 different subunits. This is a component of the iron-sulfur (IP) fragment of the enzyme. Requires [4Fe-4S] cluster as cofactor. Post-translationally, hydroxylated ar Arg-114 by NDUFAF5 early in the pathway of assembly of complex I, before the formation of the juncture between peripheral and membrane arms.

It is found in the mitochondrion inner membrane. The enzyme catalyses a ubiquinone + NADH + 5 H(+)(in) = a ubiquinol + NAD(+) + 4 H(+)(out). Core subunit of the mitochondrial membrane respiratory chain NADH dehydrogenase (Complex I) which catalyzes electron transfer from NADH through the respiratory chain, using ubiquinone as an electron acceptor. Essential for the catalytic activity of complex I. The polypeptide is NADH dehydrogenase [ubiquinone] iron-sulfur protein 7, mitochondrial (NDUFS7) (Bos taurus (Bovine)).